The sequence spans 473 residues: Suppressor of SWI4 1 homolog (473 aa).

The Brix domain occupies 29-292; it reads PHSFVFTRGC…LIKVQEGVGE (264 aa). Phosphoserine is present on residues Ser-238 and Ser-240. A disordered region spans residues 323–473; sequence AQRQAQQAQN…GRGRPRKRVA (151 aa). Residues 324-334 show a composition bias toward low complexity; sequence QRQAQQAQNVQ. Over residues 335–360 the composition is skewed to basic and acidic residues; sequence RKQEQREAHRKKSLEGMKKARVRGGD. A compositionally biased stretch (acidic residues) spans 376–388; sequence GEDDDEQEDDDIE. Residues 407–421 are compositionally biased toward basic residues; that stretch reads KRKRLAKSPGQKRKR. Over residues 422–444 the composition is skewed to basic and acidic residues; sequence REMDRGRGRLCDQKFPKPKDKSH. The residue at position 438 (Lys-438) is an N6-acetyllysine. Basic residues predominate over residues 464 to 473; it reads GRGRPRKRVA.

It is found in the nucleus. Its subcellular location is the nucleolus. In terms of biological role, may have a role in cell growth. The sequence is that of Suppressor of SWI4 1 homolog (PPAN) from Pongo abelii (Sumatran orangutan).